We begin with the raw amino-acid sequence, 344 residues long: KRR1 small subunit processome component homolog (344 aa).

The region spanning 126 to 194 is the KH domain; sequence DIIKIGNLVH…VRDIVLDTMN (69 aa). Positions 230-246 are enriched in basic residues; that stretch reads KNKNISKRKQPKNKKPK. Residues 230–326 form a disordered region; the sequence is KNKNISKRKQ…KRAAEDNKVD (97 aa). Positions 271–344 form a coiled coil; the sequence is FLNKEQKQAK…MKANKKKERS (74 aa). Basic and acidic residues predominate over residues 272–303; it reads LNKEQKQAKRQQERTAKQAEAAKKQDERRNKD.

Belongs to the KRR1 family. In terms of assembly, monomer. Component of the ribosomal small subunit (SSU) processome.

Its subcellular location is the nucleus. The protein localises to the nucleolus. Functionally, required for 40S ribosome biogenesis. Involved in nucleolar processing of pre-18S ribosomal RNA and ribosome assembly. Binds to RNA. Required for female germline development, cell viability during eye development and for survival of dividing cells and epithelial cells during early wing disk development. The polypeptide is KRR1 small subunit processome component homolog (Drosophila mojavensis (Fruit fly)).